The sequence spans 474 residues: Probable threonine--tRNA ligase, mitochondrial (474 aa).

The N-terminal 27 residues, 1-27, are a transit peptide targeting the mitochondrion; sequence MMKLKKFQLHTPFAHSCNRVEIYTARF.

The protein belongs to the class-II aminoacyl-tRNA synthetase family.

The protein localises to the mitochondrion matrix. The enzyme catalyses tRNA(Thr) + L-threonine + ATP = L-threonyl-tRNA(Thr) + AMP + diphosphate + H(+). The chain is Probable threonine--tRNA ligase, mitochondrial from Schizosaccharomyces pombe (strain 972 / ATCC 24843) (Fission yeast).